Consider the following 131-residue polypeptide: uncharacterized protein (131 aa).

The next 2 membrane-spanning stretches (helical) occupy residues 68-88 and 94-114; these read VVRA…VAPI and VLGA…IVAI.

Its subcellular location is the cell membrane. This is an uncharacterized protein from Methanocaldococcus jannaschii (strain ATCC 43067 / DSM 2661 / JAL-1 / JCM 10045 / NBRC 100440) (Methanococcus jannaschii).